We begin with the raw amino-acid sequence, 119 residues long: Beta-2-microglobulin (119 aa).

The N-terminal stretch at 1–20 (MARFVVVALLALLSLSGLEA) is a signal peptide. The Ig-like C1-type domain occupies 25–114 (PKIQVYSRHP…VTFPTPKTVK (90 aa)). The cysteines at positions 45 and 100 are disulfide-linked.

The protein belongs to the beta-2-microglobulin family. In terms of assembly, heterodimer of an alpha chain and a beta chain. Beta-2-microglobulin is the beta-chain of major histocompatibility complex class I molecules.

The protein resides in the secreted. Its function is as follows. Component of the class I major histocompatibility complex (MHC). Involved in the presentation of peptide antigens to the immune system. The sequence is that of Beta-2-microglobulin (B2M) from Alouatta seniculus (Red howler monkey).